Here is a 109-residue protein sequence, read N- to C-terminus: Nucleoid-associated protein MS1507 (109 aa).

The tract at residues 1-21 (MFGKGGLGNLMKQAQQMQERM) is disordered.

The protein belongs to the YbaB/EbfC family. As to quaternary structure, homodimer.

It localises to the cytoplasm. The protein resides in the nucleoid. Binds to DNA and alters its conformation. May be involved in regulation of gene expression, nucleoid organization and DNA protection. This is Nucleoid-associated protein MS1507 from Mannheimia succiniciproducens (strain KCTC 0769BP / MBEL55E).